A 281-amino-acid chain; its full sequence is Pantothenate synthetase (281 aa).

30–37 lines the ATP pocket; that stretch reads MGYLHEGH. The Proton donor role is filled by His-37. Gln-61 is a (R)-pantoate binding site. Beta-alanine is bound at residue Gln-61. Residue 147–150 coordinates ATP; it reads GQKD. Residue Gln-153 participates in (R)-pantoate binding. Residues Val-176 and 184-187 each bind ATP; that span reads MSSR.

It belongs to the pantothenate synthetase family. As to quaternary structure, homodimer.

It is found in the cytoplasm. It carries out the reaction (R)-pantoate + beta-alanine + ATP = (R)-pantothenate + AMP + diphosphate + H(+). The protein operates within cofactor biosynthesis; (R)-pantothenate biosynthesis; (R)-pantothenate from (R)-pantoate and beta-alanine: step 1/1. Functionally, catalyzes the condensation of pantoate with beta-alanine in an ATP-dependent reaction via a pantoyl-adenylate intermediate. The sequence is that of Pantothenate synthetase from Heliobacterium modesticaldum (strain ATCC 51547 / Ice1).